We begin with the raw amino-acid sequence, 522 residues long: Ankyrin repeat and death domain-containing protein 1A (522 aa).

11 ANK repeats span residues 14–43 (PLER…NTRA), 47–76 (VGRV…AVDE), 90–119 (FGMN…KIHC), 123–152 (DGLT…DVAL), 158–187 (LGRT…DHNV), 191–220 (EGNT…DLEE), 224–253 (EGLT…TVNA), 257–286 (KNLS…CANV), 290–319 (QGAS…DVNA), 323–352 (RQQT…DLNL), and 356–385 (QGKT…FYRW). Positions 413–501 (SVLWRLASRY…DLAGWSTMAR (89 aa)) constitute a Death domain.

In Homo sapiens (Human), this protein is Ankyrin repeat and death domain-containing protein 1A (ANKDD1A).